The following is a 610-amino-acid chain: Granule-bound starch synthase 1, chloroplastic/amyloplastic (610 aa).

A chloroplast-targeting transit peptide spans 1-79; sequence MATVTASSNF…SKVKTAGKIV (79 aa). Lys-98 is an ADP-alpha-D-glucose binding site. Positions 438–454 form a coiled coil; sequence TGKKKMEAQILELEEKF.

This sequence belongs to the glycosyltransferase 1 family. Bacterial/plant glycogen synthase subfamily. As to quaternary structure, interacts with PTST. This interaction is critical for the localization to starch granules. In terms of tissue distribution, expressed in roots, inflorescences, flowers, fruits and at much higher levels in leaves.

The protein localises to the plastid. Its subcellular location is the chloroplast. The enzyme catalyses an NDP-alpha-D-glucose + [(1-&gt;4)-alpha-D-glucosyl](n) = [(1-&gt;4)-alpha-D-glucosyl](n+1) + a ribonucleoside 5'-diphosphate + H(+). Its pathway is glycan biosynthesis; starch biosynthesis. Required for the synthesis of amylose. Destroyed as it is released from the starch granules during the night. The circadian expression is controlled by CCA1 and LHY transcription factors. This chain is Granule-bound starch synthase 1, chloroplastic/amyloplastic, found in Arabidopsis thaliana (Mouse-ear cress).